Consider the following 365-residue polypeptide: DNA replication and repair protein RecF (365 aa).

ATP is bound at residue 30 to 37; it reads GRNAQGKT.

The protein belongs to the RecF family.

The protein localises to the cytoplasm. Its function is as follows. The RecF protein is involved in DNA metabolism; it is required for DNA replication and normal SOS inducibility. RecF binds preferentially to single-stranded, linear DNA. It also seems to bind ATP. This is DNA replication and repair protein RecF from Streptococcus pneumoniae (strain 70585).